We begin with the raw amino-acid sequence, 905 residues long: DNA mismatch repair protein MutS (905 aa).

The tract at residues Met1 to Lys95 is disordered. A compositionally biased stretch (basic and acidic residues) spans Asn38–Ala50. Gly721–Ser728 provides a ligand contact to ATP.

Belongs to the DNA mismatch repair MutS family.

Its function is as follows. This protein is involved in the repair of mismatches in DNA. It is possible that it carries out the mismatch recognition step. This protein has a weak ATPase activity. In Synechococcus sp. (strain CC9902), this protein is DNA mismatch repair protein MutS.